The primary structure comprises 700 residues: MASTVEGGDTALLPEFPRGPLDAYRARASFSWKELALFTEGEGMLRFKKTIFSALENDPLFARSPGADLSLEKYRELNFLRCKRIFEYDFLSVEDMFKSPLKVPALIQCLGMYDSSLAAKYLLHSLVFGSAVYSSGSERHLTYIQKIFRMEIFGCFALTELSHGSNTKAIRTTAHYDPATEEFIIHSPDFEAAKFWVGNMGKTATHAVVFAKLCVPGDQCHGLHPFIVQIRDPKTLLPMPGVMVGDIGKKLGQNGLDNGFAMFHKVRVPRQSLLNRMGDVTPEGTYVSPFKDVRQRFGASLGSLSSGRVSIVSLAILNLKLAVAIALRFSATRRQFGPTEEEEIPVLEYPMQQWRLLPYLAAVYALDHFSKSLFLDLVELQRGLASGDRSARQAELGREIHALASASKPLASWTTQQGIQECREACGGHGYLAMNRLGVLRDDNDPNCTYEGDNNILLQQTSNYLLGLLAHQVHDGACFRSPLKSVDFLDAYPGILDQKFEVSSVADCLDSAVALAAYKWLVCYLLRETYQKLNQEKRSGSSDFEARNKCQVSHGRPLALAFVELTVVQRFHEHVHQPSVPPSLRAVLGRLSALYALWSLSRHAALLYRGGYFSGEQAGEVLESAVLALCSQLKDDAVALVDVIAPPDFVLDSPIGRADGELYKNLWGAVLQESKVLERASWWPEFSVNKPVIGSLKSKL.

Ala2 bears the N-acetylalanine mark. Thr281 is modified (phosphothreonine). Residues 698–700 (SKL) carry the Microbody targeting signal motif.

Belongs to the acyl-CoA oxidase family. The cofactor is FAD.

It localises to the peroxisome. It carries out the reaction a 2,3-saturated acyl-CoA + O2 = a (2E)-enoyl-CoA + H2O2. The catalysed reaction is (2S)-pristanoyl-CoA + O2 = (2E)-pristenoyl-CoA + H2O2. It catalyses the reaction tetracosanoyl-CoA + O2 = (2E)-tetracosenoyl-CoA + H2O2. The enzyme catalyses hexadecanoyl-CoA + O2 = (2E)-hexadecenoyl-CoA + H2O2. It carries out the reaction hexadecanedioyl-CoA + O2 = (2E)-hexadecenedioyl-CoA + H2O2. The protein operates within lipid metabolism; peroxisomal fatty acid beta-oxidation. In terms of biological role, oxidizes the CoA-esters of 2-methyl-branched fatty acids. The polypeptide is Peroxisomal acyl-coenzyme A oxidase 3 (ACOX3) (Homo sapiens (Human)).